A 386-amino-acid polypeptide reads, in one-letter code: Enamidase (386 aa).

His-67, His-69, and Glu-164 together coordinate Zn(2+). Positions 164, 193, and 220 each coordinate Fe cation. Position 276 (Asp-276) interacts with Zn(2+).

As to quaternary structure, homotetramer. Dimer of dimers. It depends on Fe cation as a cofactor. Zn(2+) is required as a cofactor.

It carries out the reaction 1,4,5,6-tetrahydro-6-oxonicotinate + 2 H2O = 2-formylglutarate + NH4(+). Its pathway is cofactor degradation; nicotinate degradation; propanoate and pyruvate from 6-hydroxynicotinate: step 2/8. Functionally, decyclization of 6-oxo-1,4,5,6-tetrahydronicotinate to form 2-(enamine)glutarate, followed by hydrolysis to form (S)-2-formylglutarate. The protein is Enamidase of Eubacterium barkeri (Clostridium barkeri).